Consider the following 261-residue polypeptide: MEVNDKFFAQDDIFWENYLKGRPRVPDSFFDRIFDYHKAKGGHFGTVHDVGAGNGPYALRLRSRFDHVIVSDIVANNIELARRRLQGEEGFSFRTSRLQDADDIAAGSVDMVFATNVMHFADPQDIAMAAIAHQLRPGALFRQGGRQLLNKANDPTETARVMLRTQGTRGIQSMLPLDDVHQTTPEPNYTGPDDAEIYEDDEGWSFETDLAGVKEHFESFPFVSQFPGAFTEMYRELDDLLADGKPVQGYFPVKVILATRS.

The segment at 49–141 is methyltransferase domain; sequence DVGAGNGPYA…AHQLRPGALF (93 aa).

Belongs to the methyltransferase superfamily.

Its pathway is secondary metabolite biosynthesis. In terms of biological role, methyltransferase; part of the gene cluster that mediates the biosynthesis of the tetrahydroxanthone dimer neosartorin, which exhibits antibacterial activity. The two different monomeric units appear to be synthesized by the same set of enzymes, among which the Baeyer-Villiger monooxygenase nsrF is the key enzyme for the divergence of the biosynthetic routes. The pathway begins with the synthesis of atrochrysone thioester by the polyketide synthase nsrB. The atrochrysone carboxyl ACP thioesterase nsrC then breaks the thioester bond and releases the atrochrysone carboxylic acid from AacuL. Atrochrysone carboxylic acid is decarboxylated by the decarboxylase nsrE, and oxidized by the anthrone oxygenase nsrD to yield emodin. Emodin is then reduced to emodin hydroquinone by the oxidoreductase nsrR. A-ring reduction by the short chain dehydrogenase nsrJ, dehydration by the scytalone dehydratase-like protein nsrI and probable spontaneous re-oxidation, results in overall deoxygenation to chrysophanol. The Baeyer-Villiger monooxygenase nsrF accepts chrysophanol as a substrate to insert one oxygen atom at two different positions to yield the precursors of both monomric units. NsrF is promiscuous/flexible in interacting with the 2 (non methylated and methylated) aromatic rings of chrysophanol, thus diverging the biosynthetic pathway at this point. After the hydrolysis of the lactones, methylesterification by the methyltransferase nsrG yields respectively moniliphenone and 2,2',6'-trihydroxy-4-methyl-6-methoxya-cyldiphenylmethanone. The next steps are the hydroxylation by the FAD-dependent monooxygenase nsrK, followed by isomerization by the monooxygenase nsrQ. The short chain dehydrogenase/reductase nsrO then catalyzes the C-5 ketoreduction to give the xanthone skeleton of blennolide C and 5-acetylblennolide A. The acetyltransferase nsrL has a strict substrate specificity and uses only blennolide A but not blennolide C to yield 5-acetylblennolide A as the single-acetylated product. In the final step of the biosynthesis, the heterodimerization of the 2 xanthones, blennolide C and 5-acetylblennolide A, is catalyzed by the cytochrome P450 monooxygenase nsrP. NsrP can utilize at least three different xanthones as its substrates to perform the dimerization reaction. The polypeptide is Methyltransferase nsrG (Aspergillus novofumigatus (strain IBT 16806)).